The chain runs to 352 residues: 7,8-didemethyl-8-hydroxy-5-deazariboflavin synthase (352 aa).

The 241-residue stretch at 35–275 folds into the Radical SAM core domain; that stretch reads ITFSKNAFIP…EGISIQVPPN (241 aa). Positions 49, 53, and 56 each coordinate [4Fe-4S] cluster.

The protein belongs to the radical SAM superfamily. CofG family. Consists of two subunits, CofG and CofH. Requires [4Fe-4S] cluster as cofactor.

It carries out the reaction 5-amino-5-(4-hydroxybenzyl)-6-(D-ribitylimino)-5,6-dihydrouracil + S-adenosyl-L-methionine = 7,8-didemethyl-8-hydroxy-5-deazariboflavin + 5'-deoxyadenosine + L-methionine + NH4(+) + H(+). It participates in cofactor biosynthesis; coenzyme F0 biosynthesis. Functionally, catalyzes the radical-mediated synthesis of 7,8-didemethyl-8-hydroxy-5-deazariboflavin from 5-amino-5-(4-hydroxybenzyl)-6-(D-ribitylimino)-5,6-dihydrouracil. In Methanococcus maripaludis (strain C5 / ATCC BAA-1333), this protein is 7,8-didemethyl-8-hydroxy-5-deazariboflavin synthase.